The chain runs to 220 residues: Guanylate kinase (220 aa).

A Guanylate kinase-like domain is found at 15 to 194 (GLMLVISSPS…AFDAVQSIVK (180 aa)). Residue 22–29 (SPSGAGKS) participates in ATP binding.

It belongs to the guanylate kinase family.

The protein localises to the cytoplasm. The enzyme catalyses GMP + ATP = GDP + ADP. Essential for recycling GMP and indirectly, cGMP. This Rhizobium etli (strain ATCC 51251 / DSM 11541 / JCM 21823 / NBRC 15573 / CFN 42) protein is Guanylate kinase.